Consider the following 288-residue polypeptide: 33 kDa chaperonin (288 aa).

Cystine bridges form between C233/C235 and C267/C270.

Belongs to the HSP33 family. Under oxidizing conditions two disulfide bonds are formed involving the reactive cysteines. Under reducing conditions zinc is bound to the reactive cysteines and the protein is inactive.

Its subcellular location is the cytoplasm. In terms of biological role, redox regulated molecular chaperone. Protects both thermally unfolding and oxidatively damaged proteins from irreversible aggregation. Plays an important role in the bacterial defense system toward oxidative stress. This is 33 kDa chaperonin from Pasteurella multocida (strain Pm70).